The sequence spans 248 residues: DCN1-like protein 4 (248 aa).

Residues 1-35 (MPRGKRRAADTISDNMDHGQPKRARTSYTSIPTQQ) are disordered. Positions 26–35 (TSYTSIPTQQ) are enriched in polar residues. A DCUN1 domain is found at 47 to 235 (FSQKRCMAWF…MLDEFVEWLR (189 aa)).

The protein resides in the nucleus. Inhibits neddylation of cullin components of SCF-type E3 ubiquitin ligase complexes and thus regulates SCF-type complex activity. Essential for development. Function inhibits cell proliferation and cell growth. In Drosophila melanogaster (Fruit fly), this protein is DCN1-like protein 4.